We begin with the raw amino-acid sequence, 138 residues long: Basic phospholipase A2 Pla2Vb (138 aa).

The N-terminal stretch at 1–16 (MRTLWIVAVWLMGVEG) is a signal peptide. Disulfide bonds link Cys42–Cys131, Cys44–Cys60, Cys59–Cys111, Cys65–Cys138, Cys66–Cys104, Cys73–Cys97, and Cys91–Cys102. Ca(2+) contacts are provided by Tyr43, Gly45, and Gly47. His63 is an active-site residue. Asp64 contributes to the Ca(2+) binding site. The active site involves Asp105.

This sequence belongs to the phospholipase A2 family. Group II subfamily. D49 sub-subfamily. The cofactor is Ca(2+). Expressed by the venom gland.

It is found in the secreted. It catalyses the reaction a 1,2-diacyl-sn-glycero-3-phosphocholine + H2O = a 1-acyl-sn-glycero-3-phosphocholine + a fatty acid + H(+). Snake venom phospholipase A2 (PLA2) that exhibits medium anticoagulant effects by binding to factor Xa (F10) and inhibiting the prothrombinase activity (IC(50) is 90 nM). PLA2 catalyzes the calcium-dependent hydrolysis of the 2-acyl groups in 3-sn-phosphoglycerides. In Vipera berus berus (Common viper), this protein is Basic phospholipase A2 Pla2Vb.